The chain runs to 345 residues: Heat-inducible transcription repressor HrcA (345 aa).

Belongs to the HrcA family.

Its function is as follows. Negative regulator of class I heat shock genes (grpE-dnaK-dnaJ and groELS operons). Prevents heat-shock induction of these operons. This chain is Heat-inducible transcription repressor HrcA, found in Dehalococcoides mccartyi (strain ATCC BAA-2266 / KCTC 15142 / 195) (Dehalococcoides ethenogenes (strain 195)).